Here is a 163-residue protein sequence, read N- to C-terminus: uncharacterized protein (163 aa).

Residues 1-54 (MGKSARLRRSQTSSPENVLLGKDSSDDPYRSDSETESNSSSGTESNMSSDSTTS) form a disordered region. Over residues 23-33 (DSSDDPYRSDS) the composition is skewed to basic and acidic residues. Residues 36–52 (ESNSSSGTESNMSSDST) show a composition bias toward low complexity. A coiled-coil region spans residues 69-143 (LRTELAEMEM…VEELESSTRE (75 aa)).

This is an uncharacterized protein from Arabidopsis thaliana (Mouse-ear cress).